The sequence spans 100 residues: Urease subunit gamma (100 aa).

This sequence belongs to the urease gamma subunit family. As to quaternary structure, heterotrimer of UreA (gamma), UreB (beta) and UreC (alpha) subunits. Three heterotrimers associate to form the active enzyme.

It localises to the cytoplasm. It carries out the reaction urea + 2 H2O + H(+) = hydrogencarbonate + 2 NH4(+). The protein operates within nitrogen metabolism; urea degradation; CO(2) and NH(3) from urea (urease route): step 1/1. The chain is Urease subunit gamma from Rhizobium meliloti (strain 1021) (Ensifer meliloti).